The sequence spans 319 residues: Ubiquinone biosynthesis protein COQ9, mitochondrial (319 aa).

The N-terminal 45 residues, 1 to 45 (MAATVAFSGVLRRAGWRLLQLRCLPVPRCRPALAPRAFRASAMQL), are a transit peptide targeting the mitochondrion. The short motif at 17 to 32 (RLLQLRCLPVPRCRPA) is the SIFI-degron element. The tract at residues 46–99 (RSLDQQKDQPPPSSSQQQSEAQGAEEPNPEALRSPPRYTDQGGEEEEDYESEEQ) is disordered. Residues 87–98 (GGEEEEDYESEE) show a composition bias toward acidic residues. N6-acetyllysine is present on Lys-176. An a 1,2-diacylglycero-3-phosphoethanolamine-binding site is contributed by Arg-245.

It belongs to the COQ9 family. In terms of assembly, homodimer. Heterodimer; two heterodimers of COQ7:COQ9 come together on the same side of the lipid pseudo-bilayer and form a curved tetramer with a hydrophobic surface suitable for membrane interaction. These two tetramers assemble into a soluble octamer with a pseudo-bilayer of lipids captured within. Interacts with COQ7; this interaction allows ubiquinone (CoQ) isoprene intermediates presentation to COQ7 and facilitates the COQ7-mediated hydroxylase step. In response to mitochondrial stress, the precursor protein is ubiquitinated by the SIFI complex in the cytoplasm before mitochondrial import, leading to its degradation. Within the SIFI complex, UBR4 initiates ubiquitin chain that are further elongated or branched by KCMF1.

The protein resides in the mitochondrion. Its pathway is cofactor biosynthesis; ubiquinone biosynthesis. Functionally, membrane-associated protein that warps the membrane surface to access and bind aromatic isoprenes with high specificity, including ubiquinone (CoQ) isoprene intermediates and presents them directly to COQ7, therefore facilitating the COQ7-mediated hydroxylase step. Participates in the biosynthesis of coenzyme Q, also named ubiquinone, an essential lipid-soluble electron transporter for aerobic cellular respiration. The sequence is that of Ubiquinone biosynthesis protein COQ9, mitochondrial from Bos taurus (Bovine).